Reading from the N-terminus, the 274-residue chain is NH(3)-dependent NAD(+) synthetase (274 aa).

Residue 46–53 (GISGGQDS) participates in ATP binding. Aspartate 52 provides a ligand contact to Mg(2+). Arginine 140 contacts deamido-NAD(+). Residue threonine 160 participates in ATP binding. Glutamate 165 is a binding site for Mg(2+). Deamido-NAD(+)-binding residues include lysine 173 and aspartate 180. Positions 189 and 211 each coordinate ATP. 260 to 261 (HK) lines the deamido-NAD(+) pocket.

It belongs to the NAD synthetase family. Homodimer.

The catalysed reaction is deamido-NAD(+) + NH4(+) + ATP = AMP + diphosphate + NAD(+) + H(+). Its pathway is cofactor biosynthesis; NAD(+) biosynthesis; NAD(+) from deamido-NAD(+) (ammonia route): step 1/1. Functionally, catalyzes the ATP-dependent amidation of deamido-NAD to form NAD. Uses ammonia as a nitrogen source. In Streptococcus equi subsp. zooepidemicus (strain MGCS10565), this protein is NH(3)-dependent NAD(+) synthetase.